Consider the following 1107-residue polypeptide: RNA-dependent RNA polymerase 1 (1107 aa).

Belongs to the RdRP family.

It catalyses the reaction RNA(n) + a ribonucleoside 5'-triphosphate = RNA(n+1) + diphosphate. Functionally, RNA-dependent direct polymerase involved in antiviral silencing. Required for the production of some small RNAs (mainly 21 and some 22 nucleotides) derived from the crucifer-infecting tobamovirus (TMV-cg). Required for turnip mosaic virus (TuMV) silencing and accumulation of viral siRNAs. Involved in cucumber mosaic virus (CMV) silencing. Required for the biogenesis of viral secondary siRNAs, process that follows the production of primary siRNAs derived from viral RNA replication. Specifically targets the positive-strand of the 3 RNA genomes of CMV and preferentially amplifies the 5'-terminal siRNAs of each viral genomic RNA. Not involved in the production of siRNAs derived from a single-stranded 336-nucleotide satellite RNA of CMV. This Arabidopsis thaliana (Mouse-ear cress) protein is RNA-dependent RNA polymerase 1 (RDR1).